The chain runs to 131 residues: Glycine cleavage system H protein (131 aa).

The Lipoyl-binding domain maps to 24–106 (TVRVGITDYA…YGEGWLVDLR (83 aa)). Residue K65 is modified to N6-lipoyllysine.

Belongs to the GcvH family. The glycine cleavage system is composed of four proteins: P, T, L and H. Requires (R)-lipoate as cofactor.

In terms of biological role, the glycine cleavage system catalyzes the degradation of glycine. The H protein shuttles the methylamine group of glycine from the P protein to the T protein. The chain is Glycine cleavage system H protein from Mycolicibacterium smegmatis (strain ATCC 700084 / mc(2)155) (Mycobacterium smegmatis).